Reading from the N-terminus, the 302-residue chain is Probable alpha-L-glutamate ligase (302 aa).

In terms of domain architecture, ATP-grasp spans 104 to 287 (MQLLSREGVG…VAGMIIEFIE (184 aa)). ATP is bound by residues Lys-141, 178–179 (EF), Asp-187, and 211–213 (RSN). 3 residues coordinate Mg(2+): Asp-248, Glu-260, and Asn-262. 3 residues coordinate Mn(2+): Asp-248, Glu-260, and Asn-262.

This sequence belongs to the RimK family. It depends on Mg(2+) as a cofactor. Mn(2+) serves as cofactor.

This chain is Probable alpha-L-glutamate ligase, found in Halorhodospira halophila (strain DSM 244 / SL1) (Ectothiorhodospira halophila (strain DSM 244 / SL1)).